We begin with the raw amino-acid sequence, 306 residues long: tRNA dimethylallyltransferase (306 aa).

Gly14–Ser21 provides a ligand contact to ATP. Substrate is bound at residue Thr16–Ser21. The segment at Asp39 to Leu42 is interaction with substrate tRNA.

It belongs to the IPP transferase family. Monomer. Mg(2+) serves as cofactor.

It carries out the reaction adenosine(37) in tRNA + dimethylallyl diphosphate = N(6)-dimethylallyladenosine(37) in tRNA + diphosphate. Functionally, catalyzes the transfer of a dimethylallyl group onto the adenine at position 37 in tRNAs that read codons beginning with uridine, leading to the formation of N6-(dimethylallyl)adenosine (i(6)A). The sequence is that of tRNA dimethylallyltransferase from Synechococcus sp. (strain ATCC 27144 / PCC 6301 / SAUG 1402/1) (Anacystis nidulans).